A 707-amino-acid chain; its full sequence is G protein-coupled receptor kinase 2 (707 aa).

The interval 1-190 is N-terminal; that stretch reads MADLEAVLAD…ELNMQLTMND (190 aa). Residues 54-175 enclose the RGS domain; the sequence is KFDKIFNQKL…LESDKFTRFC (122 aa). Positions 191 to 455 constitute a Protein kinase domain; sequence FSVHRIIGRG…PTEVKEHPFF (265 aa). ATP contacts are provided by residues 197–205 and Lys220; that span reads IGRGGFGEV. Residue Asp318 is the Proton acceptor of the active site. The AGC-kinase C-terminal domain maps to 456–523; sequence KDVDWQTVYL…VISERWQNEI (68 aa). In terms of domain architecture, PH spans 558–658; it reads DVIVHGYIKK…WHTSLRTAHK (101 aa).

This sequence belongs to the protein kinase superfamily. AGC Ser/Thr protein kinase family. GPRK subfamily. In terms of assembly, interacts with amx-2; the interaction promotes phosphorylation of amx-2. In terms of tissue distribution, expressed in many neurons in the adult including the ASH neurons and other sensory neurons, many interneurons, and motor neurons of the ventral nerve cord. Expressed broadly in head neurons and is detected in several head acetylcholine neurons including the AVA, AVB, AVD and AVE premotor interneurons, the SMD and RMD head motor neurons, and the AIN, AIY, SIA, SIB and SAA interneurons. Expressed in HSN motor neurons and VC4/VC5 motor neurons. Also expressed in vulval muscle cells. Expressed in premotor and RIS interneurons. Expressed in ciliated neurons such as AWA, AWB, AWC, ASH and ADF olfactory and nociceptive neurons, and in chemosensory ASH neurons. Expressed in RMG neurons and AVK interneurons.

The catalysed reaction is [G-protein-coupled receptor] + ATP = [G-protein-coupled receptor]-phosphate + ADP + H(+). In terms of biological role, specifically phosphorylates the activated forms of G protein-coupled receptors. Required in adult sensory neurons for chemotaxis. Plays a role in the ASH sensory neurons in the chemotaxis response to NaCl where it is likely to modulate the strength of the NaCl avoidance response which occurs at high NaCl concentrations. Required in the HSN motor neurons for normal egg laying by promoting phosphorylation of amine oxidase amx-2 which inhibits amx-2 activity, preventing metabolism of serotonin. Acts in head acetylcholine neurons to positively regulate locomotion. Inactivates dopamine receptor dop-3 which leads to inactivation of guanine nucleotide-binding protein G(o) subunit goa-1 and activation of the unc-77/nca-1 and nca-2 ion channel proteins. Acts as a positive regulator of swimming by inactivating two dopamine receptors, dop-3 in the premotor interneurons that negatively controls early swimming through the nca ion channel, and dop-1 in the RIS neuron that inhibits late-stage swimming via the signaling of FMRFamide-like neuropeptide flp-11. Controls movement quiescence by negatively regulating multiple targets including egl-4 in ciliated neurons, the level of ligands of the neuropeptide receptor npr-1 in RMG neurons, and the secretion of flp-1 from AVK interneurons. The polypeptide is G protein-coupled receptor kinase 2 (grk-2) (Caenorhabditis elegans).